The following is a 318-amino-acid chain: Acetyl-coenzyme A carboxylase carboxyl transferase subunit alpha (318 aa).

Positions 38-292 (KLEKRLAKLE…NKTITKSLHA (255 aa)) constitute a CoA carboxyltransferase C-terminal domain.

It belongs to the AccA family. As to quaternary structure, acetyl-CoA carboxylase is a heterohexamer composed of biotin carboxyl carrier protein (AccB), biotin carboxylase (AccC) and two subunits each of ACCase subunit alpha (AccA) and ACCase subunit beta (AccD).

It localises to the cytoplasm. The enzyme catalyses N(6)-carboxybiotinyl-L-lysyl-[protein] + acetyl-CoA = N(6)-biotinyl-L-lysyl-[protein] + malonyl-CoA. It functions in the pathway lipid metabolism; malonyl-CoA biosynthesis; malonyl-CoA from acetyl-CoA: step 1/1. Component of the acetyl coenzyme A carboxylase (ACC) complex. First, biotin carboxylase catalyzes the carboxylation of biotin on its carrier protein (BCCP) and then the CO(2) group is transferred by the carboxyltransferase to acetyl-CoA to form malonyl-CoA. This is Acetyl-coenzyme A carboxylase carboxyl transferase subunit alpha from Listeria welshimeri serovar 6b (strain ATCC 35897 / DSM 20650 / CCUG 15529 / CIP 8149 / NCTC 11857 / SLCC 5334 / V8).